An 804-amino-acid chain; its full sequence is Tubulin polyglutamylase TTLL13 (804 aa).

The segment at 1-41 (MEPNNCKTSESEEDDIEEEESEEECVREESTTPNSTQQALR) is disordered. A coiled-coil region spans residues 4-30 (NNCKTSESEEDDIEEEESEEECVREES). The segment covering 11 to 26 (SEEDDIEEEESEEECV) has biased composition (acidic residues). The TTL domain maps to 85–430 (RRPLAINLTN…RGCDKKKVIE (346 aa)). ATP-binding positions include K202, 208-209 (QG), 230-233 (QQYI), and 243-245 (KFD). Residue Q208 participates in a protein binding. R269 contributes to the L-glutamate binding site. 291 to 292 (TN) serves as a coordination point for ATP. Residues Y293 and K311 each coordinate L-glutamate. Mg(2+) is bound by residues D376, E389, and N391. H392 is an a protein binding site. The segment at 401 to 482 (RLDREVKDAL…LGGYRRIYPG (82 aa)) is c-MTBD region. K407 is an L-glutamate binding site. 2 coiled-coil regions span residues 504 to 541 (ASKA…KEQN) and 585 to 609 (QDIV…IRSL). The segment at 519-556 (IRLKQEQQENPGTKKRKENKEQNQGESAGEKSRSRTAT) is disordered. Over residues 536–551 (ENKEQNQGESAGEKSR) the composition is skewed to basic and acidic residues.

Belongs to the tubulin--tyrosine ligase family. Requires Mg(2+) as cofactor. Highly expressed in heart and testis. Expressed in brain, kidney, liver, lung, muscle and trachea. In the brain, expressed in ependymal cilia, cortex, corpus callosum and striatum.

It catalyses the reaction (L-glutamyl)(n)-gamma-L-glutamyl-L-glutamyl-[protein] + L-glutamate + ATP = (L-glutamyl)(n+1)-gamma-L-glutamyl-L-glutamyl-[protein] + ADP + phosphate + H(+). In terms of biological role, polyglutamylase which modifies tubulin, generating polyglutamate side chains of variable lengths on the gamma-carboxyl group of specific glutamate residues within the C-terminal tail of tubulin. Mediates ATP-dependent polyglutamate side-chain elongation of the polyglutamylation reaction but not the initiation step. Preferentially modifies the alpha-tubulin tail over a beta-tail. The protein is Tubulin polyglutamylase TTLL13 of Mus musculus (Mouse).